The following is a 210-amino-acid chain: Menaquinone reductase, multiheme cytochrome c subunit (210 aa).

The helical transmembrane segment at 20 to 40 (GGAAPFFVGLVVALVFGWWAF) threads the bilayer. Positions 67, 70, 71, 88, 91, 92, 140, 143, 144, 152, 155, 156, 186, 189, 190, 205, 208, and 209 each coordinate heme.

This sequence belongs to the multiheme cytochrome c family. In terms of assembly, the Qrc complex is composed of four subunits: QrcA, QrcB, QrcC and QrcD. Can form a supercomplex with the [NiFe] hydrogenase HynA1 and the tetraheme Type I cytochrome c3 TpIc(3), its physiological electron donors. Requires heme c as cofactor.

Its subcellular location is the cell inner membrane. Its function is as follows. Component of the respiratory Qrc complex, that catalyzes the reduction of the menaquinone pool using electrons transferred from the reduced periplasmic cytochrome c3, and which is probably involved in sulfate respiration. Is likely essential for growth on H(2) or formate since the periplasmic hydrogenases and/or formate dehydrogenases act as primary electron donors for the Qrc complex. The polypeptide is Menaquinone reductase, multiheme cytochrome c subunit (Nitratidesulfovibrio vulgaris (strain ATCC 29579 / DSM 644 / CCUG 34227 / NCIMB 8303 / VKM B-1760 / Hildenborough) (Desulfovibrio vulgaris)).